The following is a 172-amino-acid chain: Exocyst complex component 1-like (172 aa).

The chain is Exocyst complex component 1-like from Mus musculus (Mouse).